Consider the following 1178-residue polypeptide: Pyruvate carboxylase 1 (1178 aa).

In terms of domain architecture, Biotin carboxylation spans 18–470 (EKNKILVANR…WTTFIDDTPQ (453 aa)). Positions 136, 220, and 255 each coordinate ATP. Residues 140–337 (RNLAAKANVP…IVAAQIQIAA (198 aa)) form the ATP-grasp domain. Residue Arg312 is part of the active site. The region spanning 557-824 (TLLMDTTWRD…DTGINVEHVR (268 aa)) is the Pyruvate carboxyltransferase domain. Substrate-binding positions include 565-569 (RDAHQ) and Arg638. Asp566 is a binding site for a divalent metal cation. Residues Lys734, His764, and His766 each contribute to the a divalent metal cation site. The residue at position 734 (Lys734) is an N6-carboxylysine. Residue Thr898 participates in substrate binding. One can recognise a Biotinyl-binding domain in the interval 1094 to 1169 (KADMHDPLHI…DSSDLLVLLE (76 aa)). Lys1135 is modified (N6-biotinyllysine).

In terms of assembly, homotetramer. The cofactor is biotin. Zn(2+) is required as a cofactor.

It localises to the cytoplasm. The enzyme catalyses hydrogencarbonate + pyruvate + ATP = oxaloacetate + ADP + phosphate + H(+). It functions in the pathway carbohydrate biosynthesis; gluconeogenesis. Functionally, pyruvate carboxylase catalyzes a 2-step reaction, involving the ATP-dependent carboxylation of the covalently attached biotin in the first step and the transfer of the carboxyl group to pyruvate in the second. This is Pyruvate carboxylase 1 (PYC1) from Saccharomyces cerevisiae (strain ATCC 204508 / S288c) (Baker's yeast).